Here is a 681-residue protein sequence, read N- to C-terminus: DNA ligase (681 aa).

Residues 33–37 (DGQFD), 83–84 (SL), and Glu-113 each bind NAD(+). The active-site N6-AMP-lysine intermediate is Lys-115. The NAD(+) site is built by Arg-136, Glu-176, Lys-292, and Lys-316. Residues Cys-410, Cys-413, Cys-429, and Cys-435 each coordinate Zn(2+). A BRCT domain is found at 599-681 (SIPRNLEGLS…RALLADGPPA (83 aa)).

The protein belongs to the NAD-dependent DNA ligase family. LigA subfamily. The cofactor is Mg(2+). Requires Mn(2+) as cofactor.

It carries out the reaction NAD(+) + (deoxyribonucleotide)n-3'-hydroxyl + 5'-phospho-(deoxyribonucleotide)m = (deoxyribonucleotide)n+m + AMP + beta-nicotinamide D-nucleotide.. Its function is as follows. DNA ligase that catalyzes the formation of phosphodiester linkages between 5'-phosphoryl and 3'-hydroxyl groups in double-stranded DNA using NAD as a coenzyme and as the energy source for the reaction. It is essential for DNA replication and repair of damaged DNA. The chain is DNA ligase from Mycobacteroides abscessus (strain ATCC 19977 / DSM 44196 / CCUG 20993 / CIP 104536 / JCM 13569 / NCTC 13031 / TMC 1543 / L948) (Mycobacterium abscessus).